A 143-amino-acid polypeptide reads, in one-letter code: Antiholin-like protein LrgA (143 aa).

Transmembrane regions (helical) follow at residues 6-26 (VYSF…SNII), 30-50 (LPIP…LLCL), 61-81 (LGTA…ISVI), and 97-117 (VIVV…QFIL).

Belongs to the CidA/LrgA family. LrgA subfamily.

It localises to the cell membrane. Inhibits the expression or activity of extracellular murein hydrolases by interacting, possibly with LrgB, with the holin-like protein CidA. The LrgAB and CidA proteins may affect the proton motive force of the membrane. May be involved in programmed cell death (PCD), possibly triggering PCD in response to antibiotics and environmental stresses. The chain is Antiholin-like protein LrgA from Bacillus anthracis (strain A0248).